The primary structure comprises 181 residues: Acireductone dioxygenase (181 aa).

Fe(2+)-binding residues include His91, His93, Glu97, and His136. Ni(2+)-binding residues include His91, His93, Glu97, and His136.

The protein belongs to the acireductone dioxygenase (ARD) family. In terms of assembly, monomer. Interacts with MMP14. The cofactor is Fe(2+). Ni(2+) serves as cofactor.

It localises to the cytoplasm. Its subcellular location is the nucleus. The protein resides in the cell membrane. The catalysed reaction is 1,2-dihydroxy-5-(methylsulfanyl)pent-1-en-3-one + O2 = 4-methylsulfanyl-2-oxobutanoate + formate + 2 H(+). It catalyses the reaction 1,2-dihydroxy-5-(methylsulfanyl)pent-1-en-3-one + O2 = 3-(methylsulfanyl)propanoate + CO + formate + 2 H(+). It functions in the pathway amino-acid biosynthesis; L-methionine biosynthesis via salvage pathway; L-methionine from S-methyl-5-thio-alpha-D-ribose 1-phosphate: step 5/6. Functionally, catalyzes 2 different reactions between oxygen and the acireductone 1,2-dihydroxy-3-keto-5-methylthiopentene (DHK-MTPene) depending upon the metal bound in the active site. Fe-containing acireductone dioxygenase (Fe-ARD) produces formate and 2-keto-4-methylthiobutyrate (KMTB), the alpha-ketoacid precursor of methionine in the methionine recycle pathway. Ni-containing acireductone dioxygenase (Ni-ARD) produces methylthiopropionate, carbon monoxide and formate, and does not lie on the methionine recycle pathway. The polypeptide is Acireductone dioxygenase (adi1) (Danio rerio (Zebrafish)).